Consider the following 603-residue polypeptide: Protein Spindly (603 aa).

At Met-1 the chain carries N-acetylmethionine. Positions 1–442 (MESDVIADLR…LKLKYEPEEK (442 aa)) form a coiled coil. Ser-513 and Ser-553 each carry phosphoserine. Residues 542-577 (ALSERSRNTPNSPRLAAESRLQREVKQGKETASKLE) form a disordered region. The span at 561 to 577 (RLQREVKQGKETASKLE) shows a compositional bias: basic and acidic residues.

This sequence belongs to the Spindly family. As to quaternary structure, interacts with KNTC1 and ZW10. These interactions appear weak and may be transient or indirect. Interacts with dynein intermediate chain and dynactin (DCTN1). Interacts with the catalytically active form of USP45. Monoubiquitinated with'Lys-48' linkage. Deubiquitinated by USP45.

It is found in the cytoplasm. The protein localises to the cytoskeleton. Its subcellular location is the microtubule organizing center. It localises to the centrosome. The protein resides in the chromosome. It is found in the centromere. The protein localises to the kinetochore. Its subcellular location is the nucleus. It localises to the spindle pole. Its function is as follows. Required for the localization of dynein and dynactin to the mitotic kintochore. Dynein is believed to control the initial lateral interaction between the kinetochore and spindle microtubules and to facilitate the subsequent formation of end-on kinetochore-microtubule attachments mediated by the NDC80 complex. Also required for correct spindle orientation. Does not appear to be required for the removal of spindle assembly checkpoint (SAC) proteins from the kinetochore upon bipolar spindle attachment. Acts as an adapter protein linking the dynein motor complex to various cargos and converts dynein from a non-processive to a highly processive motor in the presence of dynactin. Facilitates the interaction between dynein and dynactin and activates dynein processivity (the ability to move along a microtubule for a long distance without falling off the track). Plays a role in cell migration. The sequence is that of Protein Spindly from Bos taurus (Bovine).